The sequence spans 417 residues: RH-like protein IIR (417 aa).

A run of 11 helical transmembrane segments spans residues 12-32, 44-64, 77-97, 125-145, 172-192, 203-223, 238-258, 265-285, 287-307, 331-351, and 358-378; these read CLPLCALTLEAALILLFYFFT, LVASYQVGQDLTVMAAIGFGF, VAFSLFMLALGVQWAILLDGF, ISVDAVLGKVNLVQLVVMVLV, IYVFAAYFGLSVAWCLPKPLP, TIPSLSAMLGALFLWMFWPSF, VFNTYYAVAVSVVTAISGSSL, ISMSYMHNAVLAGGVAVGTSC, LIPSPWLAMVLGLVAGLISVG, NFSWLGLLGEIIYIVLVVRHT, and MIGFQVLLRIGEFSLATTIAL.

Belongs to the ammonium transporter (TC 2.A.49) family. Rh subfamily.

Its subcellular location is the membrane. Its function is as follows. May be part of an oligomeric complex which is likely to have a transport or channel function in the erythrocyte membrane. This Pan troglodytes (Chimpanzee) protein is RH-like protein IIR.